The sequence spans 402 residues: Serine/threonine-protein kinase US3 homolog (402 aa).

Disordered stretches follow at residues M1–D21 and F46–T88. The Protein kinase domain maps to Y102–F386. ATP contacts are provided by residues P110–V118 and K127. Residue D218 is the Proton acceptor of the active site.

The protein belongs to the protein kinase superfamily. Ser/Thr protein kinase family. Post-translationally, phosphorylated by UL13 homolog; this phosphorylation regulates subsequent phosphorylation of UL31 and UL34 homologs by US3. Autophosphorylated.

It localises to the host cytoplasm. The protein localises to the host nucleus. The catalysed reaction is L-seryl-[protein] + ATP = O-phospho-L-seryl-[protein] + ADP + H(+). The enzyme catalyses L-threonyl-[protein] + ATP = O-phospho-L-threonyl-[protein] + ADP + H(+). Functionally, multifunctional serine/threonine kinase that plays a role in several processes including egress of virus particles from the nucleus, modulation of the actin cytoskeleton and inhibition of apoptosis. Phosphorylates UL31 and UL34 homologs, two critical regulators of capsid budding from nucleus to endoplasmic reticulum, thereby facilitating virion egress. Modulates and redistributes host components of the nuclear envelope, including LMNA, emerin/EMD and the nuclear matrix protein MATR3. Phosphorylates envelope glycoprotein B (gB), probably to direct it to the cell surface. Promotes virus intracellular spread by restructuring host cell cytoskeleton. Blocks host apoptosis to extend cell survival and allow efficient viral replication. Promotes viral gene expression by phosphorylating host HDAC2 to reduce viral genome silencing. This is Serine/threonine-protein kinase US3 homolog (US1206) from Gallid herpesvirus 2 (strain GA) (GaHV-2).